We begin with the raw amino-acid sequence, 244 residues long: Proteasome subunit alpha (244 aa).

The protein belongs to the peptidase T1A family. The 20S proteasome core is composed of 14 alpha and 14 beta subunits that assemble into four stacked heptameric rings, resulting in a barrel-shaped structure. The two inner rings, each composed of seven catalytic beta subunits, are sandwiched by two outer rings, each composed of seven alpha subunits. The catalytic chamber with the active sites is on the inside of the barrel. Has a gated structure, the ends of the cylinder being occluded by the N-termini of the alpha-subunits. Is capped by the proteasome-associated ATPase, ARC.

Its subcellular location is the cytoplasm. Its pathway is protein degradation; proteasomal Pup-dependent pathway. With respect to regulation, the formation of the proteasomal ATPase ARC-20S proteasome complex, likely via the docking of the C-termini of ARC into the intersubunit pockets in the alpha-rings, may trigger opening of the gate for substrate entry. Interconversion between the open-gate and close-gate conformations leads to a dynamic regulation of the 20S proteasome proteolysis activity. Its function is as follows. Component of the proteasome core, a large protease complex with broad specificity involved in protein degradation. The polypeptide is Proteasome subunit alpha (Xylanimonas cellulosilytica (strain DSM 15894 / JCM 12276 / CECT 5975 / KCTC 9989 / LMG 20990 / NBRC 107835 / XIL07)).